Here is a 146-residue protein sequence, read N- to C-terminus: SCPCDANSCIMSATLSNEPSSRFSDCSFSLPSRFSDCSFNQYSSDIIHYHECLLNEPSRTDIVSPPVCGNYYPEVGEDCDCGPPANCQNPCCDAATCGLTTGSQCAEGLCCDQCRLKKAGTICRKARGDNPDDRCTGQSGVCPRNT.

The region spanning 1–57 (SCPCDANSCIMSATLSNEPSSRFSDCSFSLPSRFSDCSFNQYSSDIIHYHECLLNEP) is the Peptidase M12B domain. Cystine bridges form between cysteine 2–cysteine 37, cysteine 4–cysteine 9, cysteine 68–cysteine 87, cysteine 79–cysteine 97, cysteine 81–cysteine 92, cysteine 91–cysteine 114, cysteine 105–cysteine 111, cysteine 110–cysteine 135, and cysteine 123–cysteine 142. One can recognise a Disintegrin domain in the interval 65–146 (PPVCGNYYPE…GQSGVCPRNT (82 aa)). The Cell attachment site signature appears at 127-129 (RGD).

The protein belongs to the venom metalloproteinase (M12B) family. P-II subfamily. P-IIb sub-subfamily. In terms of assembly, monomer (disintegrin). Zn(2+) is required as a cofactor. Expressed by the venom gland.

The protein resides in the secreted. In terms of biological role, snake venom zinc metalloproteinase that inhibits ADP-induced platelet aggregation (probably by binding integrin alpha-IIb/beta-3 (ITGA2B/ITGB3)) and degrades fibrinogen. The polypeptide is Zinc metalloproteinase-disintegrin salmosin-3 (Gloydius brevicauda (Korean slamosa snake)).